Here is a 139-residue protein sequence, read N- to C-terminus: Large ribosomal subunit protein bL17 (139 aa).

The protein belongs to the bacterial ribosomal protein bL17 family. In terms of assembly, part of the 50S ribosomal subunit. Contacts protein L32.

The polypeptide is Large ribosomal subunit protein bL17 (Cereibacter sphaeroides (strain ATCC 17025 / ATH 2.4.3) (Rhodobacter sphaeroides)).